A 334-amino-acid chain; its full sequence is GTPase Obg (334 aa).

Positions M1–L159 constitute an Obg domain. A disordered region spans residues A67–I86. The span at Q68–K77 shows a compositional bias: low complexity. Residues A160–K333 form the OBG-type G domain. Residues G166–S173, F191–H195, D213–G216, N283–D286, and S314–M316 each bind GTP. The Mg(2+) site is built by S173 and T193.

This sequence belongs to the TRAFAC class OBG-HflX-like GTPase superfamily. OBG GTPase family. Monomer. Mg(2+) is required as a cofactor.

It localises to the cytoplasm. In terms of biological role, an essential GTPase which binds GTP, GDP and possibly (p)ppGpp with moderate affinity, with high nucleotide exchange rates and a fairly low GTP hydrolysis rate. Plays a role in control of the cell cycle, stress response, ribosome biogenesis and in those bacteria that undergo differentiation, in morphogenesis control. In Buchnera aphidicola subsp. Acyrthosiphon pisum (strain 5A), this protein is GTPase Obg.